The chain runs to 141 residues: Vesicle-associated membrane protein 4 (141 aa).

Residues 1-51 (MPPKFKRHLNDDDVTGSVKSERRNLLEDDSDEEEDFFLRGPSGPRFGPRND) are disordered. At 1 to 115 (MPPKFKRHLN…RRQMWWRGCK (115 aa)) the chain is on the cytoplasmic side. Residues serine 17 and serine 30 each carry the phosphoserine modification. Residues 52–112 (KIKHVQNQVD…KQLRRQMWWR (61 aa)) enclose the v-SNARE coiled-coil homology domain. The helical; Anchor for type IV membrane protein transmembrane segment at 116–136 (IKAIMALVAAILLLVIIILIV) threads the bilayer. The Vesicular segment spans residues 137 to 141 (MKYRT).

Belongs to the synaptobrevin family. As to quaternary structure, identified in a complex containing STX6, STX12, VAMP4 and VTI1A. Interacts with BAIAP3; this interaction is increased in the presence of calcium.

The protein resides in the golgi apparatus. The protein localises to the trans-Golgi network membrane. Functionally, involved in the pathway that functions to remove an inhibitor (probably synaptotagmin-4) of calcium-triggered exocytosis during the maturation of secretory granules. May be a marker for this sorting pathway that is critical for remodeling the secretory response of granule. This chain is Vesicle-associated membrane protein 4 (VAMP4), found in Homo sapiens (Human).